Consider the following 309-residue polypeptide: Homoserine O-succinyltransferase (309 aa).

Catalysis depends on C142, which acts as the Acyl-thioester intermediate. The substrate site is built by K163 and S192. Catalysis depends on H235, which acts as the Proton acceptor. E237 is a catalytic residue. Residue R249 coordinates substrate.

This sequence belongs to the MetA family.

Its subcellular location is the cytoplasm. It catalyses the reaction L-homoserine + succinyl-CoA = O-succinyl-L-homoserine + CoA. It functions in the pathway amino-acid biosynthesis; L-methionine biosynthesis via de novo pathway; O-succinyl-L-homoserine from L-homoserine: step 1/1. Its function is as follows. Transfers a succinyl group from succinyl-CoA to L-homoserine, forming succinyl-L-homoserine. This chain is Homoserine O-succinyltransferase, found in Edwardsiella ictaluri (strain 93-146).